A 402-amino-acid polypeptide reads, in one-letter code: Propionate kinase (402 aa).

Asn-11 and Lys-18 together coordinate ATP. Asn-11 is a binding site for Mg(2+). Arg-86 is a substrate binding site. The Proton donor/acceptor role is filled by Asp-143. Residues His-175, 203 to 207 (HLGNG), 278 to 280 (DLR), and 326 to 330 (GIGEN) each bind ATP.

This sequence belongs to the acetokinase family. TdcD subfamily. As to quaternary structure, homodimer. Requires Mg(2+) as cofactor.

The catalysed reaction is propanoate + ATP = propanoyl phosphate + ADP. Its pathway is amino-acid degradation; L-threonine degradation via propanoate pathway; propanoate from L-threonine: step 4/4. Functionally, catalyzes the conversion of propionyl phosphate and ADP to propionate and ATP. The protein is Propionate kinase of Edwardsiella piscicida.